A 435-amino-acid chain; its full sequence is GTPase Der (435 aa).

EngA-type G domains lie at 4–167 (PTLA…PSED) and 175–350 (IKFS…ENQT). GTP contacts are provided by residues 10-17 (GRPNVGKS), 57-61 (DTGGI), 119-122 (NKVD), 181-188 (GRPNVGKS), 228-232 (DTAGI), and 293-296 (NKWD). One can recognise a KH-like domain in the interval 351–435 (RRIQSSVLND…PIHIIARKRK (85 aa)).

Belongs to the TRAFAC class TrmE-Era-EngA-EngB-Septin-like GTPase superfamily. EngA (Der) GTPase family. In terms of assembly, associates with the 50S ribosomal subunit.

Functionally, GTPase that plays an essential role in the late steps of ribosome biogenesis. This is GTPase Der from Lacticaseibacillus casei (strain BL23) (Lactobacillus casei).